Consider the following 500-residue polypeptide: Betaine aldehyde dehydrogenase, chloroplastic (500 aa).

Residues 1 to 7 constitute a chloroplast transit peptide; sequence MSMPIPS. 238-243 contributes to the NAD(+) binding site; sequence GSSATG. Glutamate 260 acts as the Proton acceptor in catalysis. Cysteine 294 serves as the catalytic Nucleophile.

The protein belongs to the aldehyde dehydrogenase family. In terms of assembly, homodimer.

It localises to the plastid. It is found in the chloroplast. It carries out the reaction betaine aldehyde + NAD(+) + H2O = glycine betaine + NADH + 2 H(+). The protein operates within amine and polyamine biosynthesis; betaine biosynthesis via choline pathway; betaine from betaine aldehyde: step 1/1. The protein is Betaine aldehyde dehydrogenase, chloroplastic of Beta vulgaris (Sugar beet).